The following is a 473-amino-acid chain: Photosystem II CP43 reaction center protein (473 aa).

Positions 1–14 (MKILYSLRRFYHVE) are excised as a propeptide. An N-acetylthreonine modification is found at Thr15. Thr15 carries the post-translational modification Phosphothreonine. A run of 5 helical transmembrane segments spans residues 69-93 (LFEV…PHLA), 134-155 (LLGP…KDRN), 178-200 (KALY…RKIT), 255-275 (KPFA…LSYS), and 291-312 (WFNN…ASQA). Residue Glu367 coordinates [CaMn4O5] cluster. Residues 447-471 (RARAAAAGFEKGIDRDLEPVLYMTP) traverse the membrane as a helical segment.

This sequence belongs to the PsbB/PsbC family. PsbC subfamily. As to quaternary structure, PSII is composed of 1 copy each of membrane proteins PsbA, PsbB, PsbC, PsbD, PsbE, PsbF, PsbH, PsbI, PsbJ, PsbK, PsbL, PsbM, PsbT, PsbX, PsbY, PsbZ, Psb30/Ycf12, at least 3 peripheral proteins of the oxygen-evolving complex and a large number of cofactors. It forms dimeric complexes. The cofactor is Binds multiple chlorophylls and provides some of the ligands for the Ca-4Mn-5O cluster of the oxygen-evolving complex. It may also provide a ligand for a Cl- that is required for oxygen evolution. PSII binds additional chlorophylls, carotenoids and specific lipids..

Its subcellular location is the plastid. It is found in the chloroplast thylakoid membrane. In terms of biological role, one of the components of the core complex of photosystem II (PSII). It binds chlorophyll and helps catalyze the primary light-induced photochemical processes of PSII. PSII is a light-driven water:plastoquinone oxidoreductase, using light energy to abstract electrons from H(2)O, generating O(2) and a proton gradient subsequently used for ATP formation. The sequence is that of Photosystem II CP43 reaction center protein from Sorghum bicolor (Sorghum).